The sequence spans 659 residues: Cyclic-di-AMP phosphodiesterase GdpP (659 aa).

The Cytoplasmic segment spans residues 1–8 (MPSFYEKP). Helical transmembrane passes span 9 to 29 (LFRYPIYALIALSIITILISF) and 30 to 50 (YFNWILGTVEVLLLAVILFFI). The Cytoplasmic portion of the chain corresponds to 51–659 (KRADSLIRQE…DEYFEGGVQR (609 aa)). Residues 84-149 (PIGIMLFNDQ…NDRKFRVVIK (66 aa)) are PAS-like domain, required for heme-binding. In terms of domain architecture, GGDEF spans 173–301 (ERTVLAYIFL…GGDQVAIKLP (129 aa)). The interval 339–496 (NVIIMGHKFP…IEATALLAGI (158 aa)) is DHH domain. Residues H345, D349, D351, D420, H444, and D499 each contribute to the Mn(2+) site. Positions 591-646 (FAVARRDEQTVCISARSLGEVNVQIIMEALEGGGHLTNAATQLSGISVSEALERLK) are DHHA1 domain.

It belongs to the GdpP/PdeA phosphodiesterase family. It depends on heme b as a cofactor. Requires Mg(2+) as cofactor. Mn(2+) serves as cofactor.

It localises to the cell membrane. The enzyme catalyses 3',3'-c-di-AMP + H2O = 5'-O-phosphonoadenylyl-(3'-&gt;5')-adenosine + H(+). With respect to regulation, phosphodiesterase (PDE) inhibited by Zn(2+), Ca(2+) inhibits in the presence of Mg(2+) but not Mn(2+); c-di-AMP PDE activity is competitively inhibited by ppGpp. Heme binding (by Fe(2+) or Fe(3+) heme) inhibits PDE, activity is partially restored by KCN or NO only for Fe(2+) heme. Binding of NO to Fe(2+) heme switches from hexa- to pentacoordination. Heme binding inhibits the ATPase activity. Functionally, has phosphodiesterase (PDE) activity against cyclic-di-AMP (c-di-AMP) and to a much lesser extent against cyclic-di-GMP (c-di-GMP) in the DHH/DHHA1 domains. Also has ATPase activity, probably via the GGDEF domain. Overexpression leads to increased sensitivity to methyl methanesulfonate (MMS) and H(2)O(2). Overexpression leads to extreme sensitivity to the beta-lactam antibiotic cefuroxime (CEF), probably dependent on PDE activity. May monitor cellular heme or NO levels. In B.subtilis c-di-AMP is a second messenger that mediates growth, DNA repair and cell wall homeostasis; it is toxic when present in excess. This Bacillus subtilis (strain 168) protein is Cyclic-di-AMP phosphodiesterase GdpP.